A 556-amino-acid polypeptide reads, in one-letter code: MQFSIFAQTCAALEAQNGRLEMKHAISVILPSLSGEDLPIFIRFLMGKIFPDWSPQKLGIGPNLLYEAVAYVAGTKKTALVDLINRTGDAGLAIEQFLATKEQTAFFTEDPSLAEVYAACTRIAASAGGRSQRERLLVLRQLFGNVSPFEARYLARLILGELRIGIGEGTVRDAIAEAYTVEPAQVEHAMQALNDLGEVALRAREGEEGLIHLSIAPFRPVKMMLAQAGTTIPEMLAAHGEVAVEFKYDGTRFQFHKEGKTCRIYSRKLEEVTDAVPEVGEALLGATDHDVILDGEVIAIGADGRPLPFQTVLRRFRRKHGIAAAREAITLVPRVFDILYRDGETLIDLPFQSRRAILSATIGPEYLAPQQVLSSAEAVDLLYLEAMAEGHEGVMLKDLLSLYSPGVRGKHWVKIKPEVETLDLVVIGAEWGEGRRARTFGSFLLACLDQGVFRAVSKVATGISDEQLQELYTLFKDQVIAESGNTVTFEPTVIFEVGYAEIQKSPSYESGYALRFPRFVQVRDDKAVEEIETLESLTTRYLAQKTQANGQPEFTL.

Glu-245 is an ATP binding site. Lys-247 serves as the catalytic N6-AMP-lysine intermediate. 6 residues coordinate ATP: Arg-252, Arg-267, Glu-296, Phe-336, Arg-408, and Lys-414.

Belongs to the ATP-dependent DNA ligase family. Requires Mg(2+) as cofactor.

It catalyses the reaction ATP + (deoxyribonucleotide)n-3'-hydroxyl + 5'-phospho-(deoxyribonucleotide)m = (deoxyribonucleotide)n+m + AMP + diphosphate.. Its function is as follows. DNA ligase that seals nicks in double-stranded DNA during DNA replication, DNA recombination and DNA repair. This chain is DNA ligase, found in Methanosphaerula palustris (strain ATCC BAA-1556 / DSM 19958 / E1-9c).